Consider the following 221-residue polypeptide: ATP phosphoribosyltransferase (221 aa).

It belongs to the ATP phosphoribosyltransferase family. Short subfamily. As to quaternary structure, heteromultimer composed of HisG and HisZ subunits.

It localises to the cytoplasm. The catalysed reaction is 1-(5-phospho-beta-D-ribosyl)-ATP + diphosphate = 5-phospho-alpha-D-ribose 1-diphosphate + ATP. It functions in the pathway amino-acid biosynthesis; L-histidine biosynthesis; L-histidine from 5-phospho-alpha-D-ribose 1-diphosphate: step 1/9. Functionally, catalyzes the condensation of ATP and 5-phosphoribose 1-diphosphate to form N'-(5'-phosphoribosyl)-ATP (PR-ATP). Has a crucial role in the pathway because the rate of histidine biosynthesis seems to be controlled primarily by regulation of HisG enzymatic activity. The sequence is that of ATP phosphoribosyltransferase from Rhizorhabdus wittichii (strain DSM 6014 / CCUG 31198 / JCM 15750 / NBRC 105917 / EY 4224 / RW1) (Sphingomonas wittichii).